Here is a 404-residue protein sequence, read N- to C-terminus: Plasma serine protease inhibitor (404 aa).

The signal sequence occupies residues 1-19 (MRLCLFLCLVLLGPRMATL). A propeptide spans 20–24 (RRSQK) (removed in mature form). O-linked (GalNAc...) threonine glycans are attached at residues Thr35 and Thr36. Asn245, Asn258, and Asn334 each carry an N-linked (GlcNAc...) asparagine glycan.

The protein belongs to the serpin family. As to quaternary structure, forms protease inhibiting heterodimers in extracellular body fluids with serine proteases such as activated protein C/coagulation factor V/F5, acrosin/ACR, chymotrypsinogen B/CTRB1, prothrombin/F2, factor Xa/F10, factor XI/F11, kallikrein/KLKB1, tissue kallikrein, trypsin/PRSS1, prostate specific antigen/KLK3, tissue plasminogen activator/PLAT and urinary plasminogen activator/PLAU. Forms membrane-anchored serine proteases inhibiting heterodimers with TMPRSS7 and TMPRSS11E. Interacts with SEMG2. In terms of processing, N-glycosylated; glycans consist of a mixture of sialylated bi- (including sialyl-Lewis X epitopes), tri- and tetra-antennary complex-type chains; affects the maximal heparin- and thrombomodulin-enhanced rates of thrombin inhibition. O-glycosylated; further modified with 2 sialic acid residues. Proteolytically cleaved at the N-terminus; inhibits slightly the heparin- and thrombomodulin-enhanced rates of thrombin inhibition. N- and O-glycosylated. Post-translationally, proteolytically cleaved. Inhibition of proteases is accompanied by formation of a stable enzyme-inhibitor complex and by degradation of the serpin to lower molecular weight derivatives. Expressed strongly in the liver, and moderately in the kidney and testis, but not in other tissues tested.

The protein localises to the secreted. The protein resides in the extracellular space. Its inhibitory activity is greatly enhanced in the presence of glycosaminoglycans, heparin, thrombomodulin and phospholipids vesicles. Its function is as follows. Heparin-dependent serine protease inhibitor acting in body fluids and secretions. Inactivates serine proteases by binding irreversibly to their serine activation site. Involved in the regulation of intravascular and extravascular proteolytic activities. Plays hemostatic roles in the blood plasma. Acts as a procoagulant and pro-inflammatory factor by inhibiting the anticoagulant activated protein C factor as well as the generation of activated protein C factor by the thrombin/thrombomodulin complex. Acts as an anticoagulant factor by inhibiting blood coagulation factors like prothrombin, factor XI, factor Xa, plasma kallikrein and fibrinolytic enzymes such as tissue- and urinary-type plasminogen activators. In seminal plasma, inactivates several serine proteases implicated in the reproductive system. Inhibits the serpin acrosin; indirectly protects component of the male genital tract from being degraded by excessive released acrosin. Inhibits tissue- and urinary-type plasminogen activator, prostate-specific antigen and kallikrein activities; has a control on the sperm motility and fertilization. Inhibits the activated protein C-catalyzed degradation of SEMG1 and SEMG2; regulates the degradation of semenogelin during the process of transfer of spermatozoa from the male reproductive tract into the female tract. In urine, inhibits urinary-type plasminogen activator and kallikrein activities. Inactivates membrane-anchored serine proteases activities such as MPRSS7 and TMPRSS11E. Inhibits urinary-type plasminogen activator-dependent tumor cell invasion and metastasis. May also play a non-inhibitory role in seminal plasma and urine as a hydrophobic hormone carrier by its binding to retinoic acid. This is Plasma serine protease inhibitor (SERPINA5) from Bos taurus (Bovine).